The following is an 833-amino-acid chain: Coiled-coil domain-containing protein 110 (833 aa).

Residues 431–778 (LQNYLKESVQ…REYLNLSDKI (348 aa)) adopt a coiled-coil conformation.

It localises to the nucleus. The protein is Coiled-coil domain-containing protein 110 (CCDC110) of Macaca fascicularis (Crab-eating macaque).